We begin with the raw amino-acid sequence, 417 residues long: 4-hydroxy-3-methylbut-2-en-1-yl diphosphate synthase (flavodoxin) (417 aa).

4 residues coordinate [4Fe-4S] cluster: Cys304, Cys307, Cys350, and Glu357.

Belongs to the IspG family. Requires [4Fe-4S] cluster as cofactor.

The catalysed reaction is (2E)-4-hydroxy-3-methylbut-2-enyl diphosphate + oxidized [flavodoxin] + H2O + 2 H(+) = 2-C-methyl-D-erythritol 2,4-cyclic diphosphate + reduced [flavodoxin]. It functions in the pathway isoprenoid biosynthesis; isopentenyl diphosphate biosynthesis via DXP pathway; isopentenyl diphosphate from 1-deoxy-D-xylulose 5-phosphate: step 5/6. Functionally, converts 2C-methyl-D-erythritol 2,4-cyclodiphosphate (ME-2,4cPP) into 1-hydroxy-2-methyl-2-(E)-butenyl 4-diphosphate. The sequence is that of 4-hydroxy-3-methylbut-2-en-1-yl diphosphate synthase (flavodoxin) from Rhizobium meliloti (strain 1021) (Ensifer meliloti).